A 296-amino-acid chain; its full sequence is Light-inducible protein CPRF3 (296 aa).

Disordered regions lie at residues 1–27, 98–165, and 190–223; these read MSDGEEGTPMKHPKPASSVEEAPITTT, PNLA…GSLE, and RVNDERELKRQRRKQSNRESARRSRLRKQAKSDE. A compositionally biased stretch (basic and acidic residues) spans 107–117; the sequence is VGRKISDEKGR. The span at 145-156 shows a compositional bias: low complexity; that stretch reads SSSDNDCPSLSS. The 64-residue stretch at 196–259 folds into the bZIP domain; the sequence is ELKRQRRKQS…AEVTSENHSI (64 aa). The segment at 198 to 220 is basic motif; the sequence is KRQRRKQSNRESARRSRLRKQAK. Residues 224–245 form a leucine-zipper region; the sequence is LQERLDNLSKENRILRKNLQRI.

It belongs to the bZIP family. Binds DNA as a dimer.

Its subcellular location is the nucleus. Binds to the G-box-like motif (5'-ACGTGGC-3') of the chalcone synthase (CHS) gene promoter. G-box and G-box-like motifs are defined in promoters of certain plant genes which are regulated by such diverse stimuli as light-induction or hormone control. The protein is Light-inducible protein CPRF3 (CPRF3) of Petroselinum crispum (Parsley).